The sequence spans 450 residues: Sulfide:quinone oxidoreductase, mitochondrial (450 aa).

Residues 53 to 54 (AG), Glu75, Gln83, and Val118 contribute to the FAD site. Lys134 and Lys173 each carry N6-acetyllysine. Cys201 (cysteine persulfide intermediate) is an active-site residue. Cys201 and Cys379 are joined by a disulfide. Asp336 is a binding site for FAD. Ser343 carries the post-translational modification Phosphoserine. Residue 344-347 (KTAA) participates in FAD binding. The Cysteine persulfide intermediate role is filled by Cys379.

This sequence belongs to the SQRD family. It depends on FAD as a cofactor.

It is found in the mitochondrion. It carries out the reaction ubiquinone-10 + hydrogen sulfide + sulfite + 2 H(+) = ubiquinol-10 + thiosulfate. The enzyme catalyses a quinone + hydrogen sulfide + glutathione + H(+) = S-sulfanylglutathione + a quinol. The catalysed reaction is ubiquinone-10 + hydrogen sulfide + glutathione + H(+) = S-sulfanylglutathione + ubiquinol-10. Catalyzes the oxidation of hydrogen sulfide with the help of a quinone, such as ubiquinone-10, giving rise to thiosulfate and ultimately to sulfane (molecular sulfur) atoms. Requires an additional electron acceptor; can use sulfite, sulfide or cyanide (in vitro). It is believed the in vivo electron acceptor is glutathione. In Mus musculus (Mouse), this protein is Sulfide:quinone oxidoreductase, mitochondrial.